The following is a 508-amino-acid chain: General transcription factor IIF subunit 1 (508 aa).

A2 is subject to N-acetylalanine. T156 carries the post-translational modification Phosphothreonine. The disordered stretch occupies residues 177-448 (MQQRRLKDQD…SSGDVQVTED (272 aa)). A phosphoserine mark is found at S217, S218, S221, and S224. The segment covering 232-251 (SKAKKKAPVTKAGRKKKKKK) has biased composition (basic residues). Composition is skewed to acidic residues over residues 255–270 (DEAFEDSDDGDFEGQE) and 303–325 (EQSESSEESEEEKPPEEDKEEEE). T331 bears the Phosphothreonine mark. Positions 343–355 (DDSDSSEESDIDS) are enriched in acidic residues. Residues 364 to 374 (AKKKTPPKRER) show a composition bias toward basic residues. A phosphoserine mark is found at S377, S380, S381, and S385. Residues 378–388 (GGSSKGTSRPG) are compositionally biased toward polar residues. Position 389 is a phosphothreonine (T389). Residues 389 to 406 (TPSAEAASTSSTLRAAAS) show a composition bias toward low complexity. S391 carries the post-translational modification Phosphoserine. K407 is subject to N6-acetyllysine. Over residues 428–443 (GPQSLSGKSTPSSGDV) the composition is skewed to polar residues. Residues S431, S433, and S436 each carry the phosphoserine modification. Position 437 is a phosphothreonine (T437). The residue at position 440 (S440) is a Phosphoserine.

This sequence belongs to the TFIIF alpha subunit family. As to quaternary structure, heterodimer of an alpha and a beta subunit. Interacts with GTF2F2, CTDP1, TAF6/TAFII80 and URI1. Interacts with GTF2B (via C-terminus and preferentially via acetylated form); this interaction prevents binding of GTF2B to GTF2F2. Part of TBP-based Pol II pre-initiation complex (PIC), in which Pol II core assembles with general transcription factors and other specific initiation factors including GTF2E1, GTF2E2, GTF2F1, GTF2F2, TCEA1, ERCC2, ERCC3, GTF2H2, GTF2H3, GTF2H4, GTF2H5, GTF2A1, GTF2A2, GTF2B and TBP; this large multi-subunit PIC complex mediates DNA unwinding and targets Pol II core to the transcription start site where the first phosphodiester bond forms. Post-translationally, phosphorylated on Ser and other residues by TAF1 and casein kinase II-like kinases.

The protein resides in the nucleus. Functionally, TFIIF is a general transcription initiation factor that binds to RNA polymerase II and helps to recruit it to the initiation complex in collaboration with TFIIB. It promotes transcription elongation. The protein is General transcription factor IIF subunit 1 (Gtf2f1) of Rattus norvegicus (Rat).